The sequence spans 420 residues: Probable ABC transporter-binding protein DR_1438 (420 aa).

Positions Met1–Thr24 are cleaved as a signal peptide.

The protein belongs to the bacterial solute-binding protein 1 family.

Its function is as follows. Probably part of a binding-protein-dependent transport system. The sequence is that of Probable ABC transporter-binding protein DR_1438 from Deinococcus radiodurans (strain ATCC 13939 / DSM 20539 / JCM 16871 / CCUG 27074 / LMG 4051 / NBRC 15346 / NCIMB 9279 / VKM B-1422 / R1).